Reading from the N-terminus, the 332-residue chain is Acetyl-coenzyme A carboxylase carboxyl transferase subunit alpha (332 aa).

In terms of domain architecture, CoA carboxyltransferase C-terminal spans 44 to 298 (QLESRAQNLR…KETLVNNLEE (255 aa)).

It belongs to the AccA family. In terms of assembly, acetyl-CoA carboxylase is a heterohexamer composed of biotin carboxyl carrier protein (AccB), biotin carboxylase (AccC) and two subunits each of ACCase subunit alpha (AccA) and ACCase subunit beta (AccD).

Its subcellular location is the cytoplasm. It carries out the reaction N(6)-carboxybiotinyl-L-lysyl-[protein] + acetyl-CoA = N(6)-biotinyl-L-lysyl-[protein] + malonyl-CoA. Its pathway is lipid metabolism; malonyl-CoA biosynthesis; malonyl-CoA from acetyl-CoA: step 1/1. Component of the acetyl coenzyme A carboxylase (ACC) complex. First, biotin carboxylase catalyzes the carboxylation of biotin on its carrier protein (BCCP) and then the CO(2) group is transferred by the carboxyltransferase to acetyl-CoA to form malonyl-CoA. The protein is Acetyl-coenzyme A carboxylase carboxyl transferase subunit alpha of Crocosphaera subtropica (strain ATCC 51142 / BH68) (Cyanothece sp. (strain ATCC 51142)).